Reading from the N-terminus, the 346-residue chain is DNA primase small subunit PriS (346 aa).

Residues aspartate 97, aspartate 99, and aspartate 278 contribute to the active site.

Belongs to the eukaryotic-type primase small subunit family. Heterodimer of a small subunit (PriS) and a large subunit (PriL). Mg(2+) serves as cofactor. It depends on Mn(2+) as a cofactor.

Its function is as follows. Catalytic subunit of DNA primase, an RNA polymerase that catalyzes the synthesis of short RNA molecules used as primers for DNA polymerase during DNA replication. The small subunit contains the primase catalytic core and has DNA synthesis activity on its own. Binding to the large subunit stabilizes and modulates the activity, increasing the rate of DNA synthesis while decreasing the length of the DNA fragments, and conferring RNA synthesis capability. The DNA polymerase activity may enable DNA primase to also catalyze primer extension after primer synthesis. May also play a role in DNA repair. The sequence is that of DNA primase small subunit PriS from Thermococcus onnurineus (strain NA1).